Reading from the N-terminus, the 34-residue chain is Photosystem II reaction center protein M (34 aa).

A helical membrane pass occupies residues 7 to 27 (GFVATLLFVLVPAIFLIILYI).

Belongs to the PsbM family. In terms of assembly, PSII is composed of 1 copy each of membrane proteins PsbA, PsbB, PsbC, PsbD, PsbE, PsbF, PsbH, PsbI, PsbJ, PsbK, PsbL, PsbM, PsbT, PsbX, PsbY, PsbZ, Psb30/Ycf12, peripheral proteins PsbO, CyanoQ (PsbQ), PsbU, PsbV and a large number of cofactors. It forms dimeric complexes.

The protein localises to the cellular thylakoid membrane. In terms of biological role, one of the components of the core complex of photosystem II (PSII). PSII is a light-driven water:plastoquinone oxidoreductase that uses light energy to abstract electrons from H(2)O, generating O(2) and a proton gradient subsequently used for ATP formation. It consists of a core antenna complex that captures photons, and an electron transfer chain that converts photonic excitation into a charge separation. This subunit is found at the monomer-monomer interface. The chain is Photosystem II reaction center protein M from Synechococcus sp. (strain RCC307).